Here is a 955-residue protein sequence, read N- to C-terminus: MIMNQEYIKVRGAKEHNLKNINVDIPRNKFVVITGLSGSGKSSLAFDTIYAEGQRRYVESLSSYARQFLHLQNKPNVESISGLSPAIAIDQKTTSKNPRSTVGTITEIYDYLRLLYARVGIPYSPATGLPIHSQTVSEMVDIINELPKGTKVYLLAPIVRGHKGEFKREIMNLKKQGFQKLIVNGEVCEIDDLPKLDKNKKHNIEVIVDRIVLDESLGNRLADSLESSLNLAEGITYLEIVELPPAVKTEFEKNQRITFSEKYSCPVSGFQLTEIEPRIFSFNSPFGACPKCEGIGKEFFFDRELIVPDQRISIKDGAIVPWGSTSSKFILETLKALADHYKFSIEVPFASLSQNVKDILFEGSGEEAIKFEFHDGSKTQIIKQPFAGIIPSLQEKDRTIESVLIKEELAKFKSEHKCTACSGFRLKDEALCVKIANFHIGEVAGMSIAALQKWFSHLEEKLNKKQLFIAERILKEITERLKFLMNVGLDYLTLSREAGTLSGGESQRIRLASQIGSGLSGVLYVLDEPSIGLHQRDNTRLIETLKRLRDLGNTVLVVEHDEETMYEADHIIDIGPGAGIHGGRVIAEGNAEEIKNFEESITGRYLSGRQTIKVPSETRVGHDNRSIELLGAVSNNLDNVDIKIPLGTFTAITGVSGSGKSSLMIHTLYKAALKHLETTSKVFPGKYRELKGLEYIDKIIDINQSPIGRTPRSNPATYTGAFTHIRDWFVELPESKARGYKVGRFSFNVKGGRCEACQGDGLIKIEMHFLPDVYVKCDICNGHRYNRETLEIKYKGKSIADILMMTVEDAMQFFEKIPLIYEKLITLNEVGLGYIKIGQSATTLSGGEAQRVKLAKELSRRSTGKTLYILDEPTTGLHIDDINKLLKVLHKLVDMGNTVLVIEHNLDVIKTADYIIDVGPEGGDKGGKIVVCGTPADIAACAESHTGRYLKQYLE.

35 to 42 lines the ATP pocket; that stretch reads GLSGSGKS. ABC transporter domains lie at 322–601 and 621–951; these read WGST…EESI and GHDN…RYLK. 654–661 lines the ATP pocket; that stretch reads GVSGSGKS. Residues 754–780 form a C4-type zinc finger; the sequence is CEACQGDGLIKIEMHFLPDVYVKCDIC.

The protein belongs to the ABC transporter superfamily. UvrA family. In terms of assembly, forms a heterotetramer with UvrB during the search for lesions.

The protein resides in the cytoplasm. Functionally, the UvrABC repair system catalyzes the recognition and processing of DNA lesions. UvrA is an ATPase and a DNA-binding protein. A damage recognition complex composed of 2 UvrA and 2 UvrB subunits scans DNA for abnormalities. When the presence of a lesion has been verified by UvrB, the UvrA molecules dissociate. The sequence is that of UvrABC system protein A from Rickettsia felis (strain ATCC VR-1525 / URRWXCal2) (Rickettsia azadi).